The sequence spans 450 residues: Glycerol dehydrogenase 1 (450 aa).

Residues Asp-99, 155-159, and 177-180 each bind NAD(+); these read GKTMD and TTAS. Residue Asp-182 participates in substrate binding. Ser-186, Leu-188, and Tyr-192 together coordinate NAD(+). Residues Asp-232, His-315, and His-333 each contribute to the substrate site. Asp-232, His-315, and His-333 together coordinate Zn(2+).

The protein belongs to the iron-containing alcohol dehydrogenase family. Requires Zn(2+) as cofactor.

It localises to the mitochondrion. The catalysed reaction is glycerol + NAD(+) = dihydroxyacetone + NADH + H(+). It participates in polyol metabolism; glycerol fermentation; glycerone phosphate from glycerol (oxidative route): step 1/2. Its function is as follows. Glycerol dehydrogenase involved in the assimilation of glycerol. The sequence is that of Glycerol dehydrogenase 1 (gld1) from Schizosaccharomyces pombe (strain 972 / ATCC 24843) (Fission yeast).